The primary structure comprises 79 residues: Exodeoxyribonuclease 7 small subunit (79 aa).

The protein belongs to the XseB family. Heterooligomer composed of large and small subunits.

Its subcellular location is the cytoplasm. The enzyme catalyses Exonucleolytic cleavage in either 5'- to 3'- or 3'- to 5'-direction to yield nucleoside 5'-phosphates.. Its function is as follows. Bidirectionally degrades single-stranded DNA into large acid-insoluble oligonucleotides, which are then degraded further into small acid-soluble oligonucleotides. The protein is Exodeoxyribonuclease 7 small subunit of Dechloromonas aromatica (strain RCB).